A 411-amino-acid chain; its full sequence is Lycopene beta cyclase (411 aa).

4–32 (ALVIGSGPAGLAIAAELAQRGLKVQGLSP) contributes to the NAD(+) binding site.

Belongs to the lycopene cyclase family. FAD serves as cofactor.

It catalyses the reaction a carotenoid psi-end group = a carotenoid beta-end derivative. The catalysed reaction is all-trans-lycopene = gamma-carotene. It carries out the reaction gamma-carotene = all-trans-beta-carotene. The enzyme catalyses all-trans-neurosporene = beta-zeacarotene. It participates in carotenoid biosynthesis; beta-carotene biosynthesis. The protein operates within carotenoid biosynthesis; beta-zeacarotene biosynthesis. Inhibited by the bleaching herbicide 2-(4-methylphenoxy)triethylamine hydrochloride (MPTA). Functionally, catalyzes the double cyclization reaction which converts lycopene to beta-carotene. It also converts neurosporene to the monocyclic beta-zeacarotene but does not cyclize zeta-carotene. The chain is Lycopene beta cyclase from Synechococcus elongatus (strain ATCC 33912 / PCC 7942 / FACHB-805) (Anacystis nidulans R2).